Reading from the N-terminus, the 403-residue chain is Probable tRNA sulfurtransferase (403 aa).

The THUMP domain occupies 60-165 (KLAEERLKPI…KEGVFLSCRT (106 aa)). ATP-binding positions include 183-184 (ML), 208-209 (HF), Arg265, Gly287, and Gln296.

Belongs to the ThiI family.

The protein resides in the cytoplasm. It catalyses the reaction [ThiI sulfur-carrier protein]-S-sulfanyl-L-cysteine + a uridine in tRNA + 2 reduced [2Fe-2S]-[ferredoxin] + ATP + H(+) = [ThiI sulfur-carrier protein]-L-cysteine + a 4-thiouridine in tRNA + 2 oxidized [2Fe-2S]-[ferredoxin] + AMP + diphosphate. The enzyme catalyses [ThiS sulfur-carrier protein]-C-terminal Gly-Gly-AMP + S-sulfanyl-L-cysteinyl-[cysteine desulfurase] + AH2 = [ThiS sulfur-carrier protein]-C-terminal-Gly-aminoethanethioate + L-cysteinyl-[cysteine desulfurase] + A + AMP + 2 H(+). It functions in the pathway cofactor biosynthesis; thiamine diphosphate biosynthesis. In terms of biological role, catalyzes the ATP-dependent transfer of a sulfur to tRNA to produce 4-thiouridine in position 8 of tRNAs, which functions as a near-UV photosensor. Also catalyzes the transfer of sulfur to the sulfur carrier protein ThiS, forming ThiS-thiocarboxylate. This is a step in the synthesis of thiazole, in the thiamine biosynthesis pathway. The sulfur is donated as persulfide by IscS. The chain is Probable tRNA sulfurtransferase from Listeria welshimeri serovar 6b (strain ATCC 35897 / DSM 20650 / CCUG 15529 / CIP 8149 / NCTC 11857 / SLCC 5334 / V8).